We begin with the raw amino-acid sequence, 609 residues long: Oxidoreductase tpcJ (609 aa).

A signal peptide spans 1–16 (MITVIKWLVSGCCALA). N-linked (GlcNAc...) asparagine glycosylation is found at Asn63, Asn107, Asn113, Asn240, Asn283, Asn471, and Asn601. 3 Plastocyanin-like domains span residues 66–186 (VSQQ…HGPS), 196–351 (PWLL…RYDE), and 429–567 (VDWK…EQPK).

Belongs to the multicopper oxidase family. Specifically expressed in conidia.

It participates in secondary metabolite biosynthesis. Its function is as follows. Oxidoreductase; part of the gene cluster that mediates the biosynthesis of trypacidin, a mycotoxin with antiprotozoal activity and that plays a role in the infection process. The pathway begins with the synthesis of atrochrysone thioester by the polyketide synthase (PKS) tpcC. The atrochrysone carboxyl ACP thioesterase tpcB then breaks the thioester bond and releases the atrochrysone carboxylic acid from tpcC. The decarboxylase tpcK converts atrochrysone carboxylic acid to atrochrysone which is further reduced into emodin anthrone. The next step is performed by the emodin anthrone oxygenase tpcL that catalyzes the oxidation of emodinanthrone to emodin. Emodin O-methyltransferase encoded by tpcA catalyzes methylation of the 8-hydroxy group of emodin to form questin. Ring cleavage of questin by questin oxidase tpcI leads to desmethylsulochrin via several intermediates including questin epoxide. Another methylation step catalyzed by tpcM leads to the formation of sulochrin which is further converted to monomethylsulfochrin by tpcH. Finally, the tpcJ catalyzes the conversion of monomethylsulfochrin to trypacidin. Trypacidin is toxic for human pulmonary and bronchial epithelial cells by initiating the intracellular formation of nitric oxide (NO) and hydrogen peroxide (H(2)O(2)), thus triggering host necrotic cell death. The trypacidin pathway is also able to produce endocrocin via a distinct route from the endocrocin Enc pathway. In Aspergillus fumigatus (strain ATCC MYA-4609 / CBS 101355 / FGSC A1100 / Af293) (Neosartorya fumigata), this protein is Oxidoreductase tpcJ.